A 594-amino-acid polypeptide reads, in one-letter code: Probable ABC transporter-binding protein DR_1571 (594 aa).

An N-terminal signal peptide occupies residues methionine 1–alanine 18.

This sequence belongs to the bacterial solute-binding protein 5 family.

In terms of biological role, probably part of a binding-protein-dependent transport system. The sequence is that of Probable ABC transporter-binding protein DR_1571 from Deinococcus radiodurans (strain ATCC 13939 / DSM 20539 / JCM 16871 / CCUG 27074 / LMG 4051 / NBRC 15346 / NCIMB 9279 / VKM B-1422 / R1).